Here is a 118-residue protein sequence, read N- to C-terminus: Putative pterin-4-alpha-carbinolamine dehydratase (118 aa).

It belongs to the pterin-4-alpha-carbinolamine dehydratase family.

It carries out the reaction (4aS,6R)-4a-hydroxy-L-erythro-5,6,7,8-tetrahydrobiopterin = (6R)-L-erythro-6,7-dihydrobiopterin + H2O. The protein is Putative pterin-4-alpha-carbinolamine dehydratase of Stutzerimonas stutzeri (strain A1501) (Pseudomonas stutzeri).